A 94-amino-acid polypeptide reads, in one-letter code: Integration host factor subunit beta (94 aa).

This sequence belongs to the bacterial histone-like protein family. In terms of assembly, heterodimer of an alpha and a beta chain.

In terms of biological role, this protein is one of the two subunits of integration host factor, a specific DNA-binding protein that functions in genetic recombination as well as in transcriptional and translational control. In Pasteurella multocida (strain Pm70), this protein is Integration host factor subunit beta (ihfB).